Reading from the N-terminus, the 601-residue chain is Elongation factor 4 (601 aa).

Residues Asp7–Lys189 form the tr-type G domain. GTP contacts are provided by residues Asp19–Thr24 and Asn136–Asp139.

Belongs to the TRAFAC class translation factor GTPase superfamily. Classic translation factor GTPase family. LepA subfamily.

It localises to the cell inner membrane. It catalyses the reaction GTP + H2O = GDP + phosphate + H(+). Its function is as follows. Required for accurate and efficient protein synthesis under certain stress conditions. May act as a fidelity factor of the translation reaction, by catalyzing a one-codon backward translocation of tRNAs on improperly translocated ribosomes. Back-translocation proceeds from a post-translocation (POST) complex to a pre-translocation (PRE) complex, thus giving elongation factor G a second chance to translocate the tRNAs correctly. Binds to ribosomes in a GTP-dependent manner. The sequence is that of Elongation factor 4 from Methylobacterium sp. (strain 4-46).